The primary structure comprises 513 residues: Pleiotropic regulator 1 (513 aa).

At M1 the chain carries N-acetylmethionine. 2 positions are modified to phosphoserine: S119 and S200. WD repeat units lie at residues 201–240 (GHLG…LKLS), 243–282 (GHIS…VIRH), 285–324 (GHLS…SVHT), 327–366 (GHTN…TRVT), 369–409 (NHKK…QNLS), 410–448 (GHNA…NFQR), and 459–498 (DSES…TEET). S390 carries the post-translational modification Phosphoserine.

The protein belongs to the WD repeat PRL1/PRL2 family. Identified in the spliceosome C complex. Component of the PRP19-CDC5L splicing complex composed of a core complex comprising a homotetramer of PRPF19, CDC5L, PLRG1 and BCAS2, and at least three less stably associated proteins CTNNBL1, CWC15 and HSPA8. Interacts (via its WD40 repeat domain) directly with CDC5L (via its C-terminal); the interaction is required for mRNA splicing but not for spliceosome assembly. Component of the minor spliceosome, which splices U12-type introns. Within this complex, interacts with CRIPT. Also interacts directly in the complex with BCAS2 and PRPF19. Interacts with USB1.

It is found in the nucleus. The protein localises to the nucleus speckle. Involved in pre-mRNA splicing as component of the spliceosome. Component of the PRP19-CDC5L complex that forms an integral part of the spliceosome and is required for activating pre-mRNA splicing. As a component of the minor spliceosome, involved in the splicing of U12-type introns in pre-mRNAs. This chain is Pleiotropic regulator 1 (PLRG1), found in Bos taurus (Bovine).